A 926-amino-acid chain; its full sequence is Translation initiation factor IF-2 (926 aa).

Disordered stretches follow at residues 1–185 (MTDS…EEVE) and 200–299 (EDKA…RRRG). Composition is skewed to low complexity over residues 13–24 (TGKKTLTLKPTG) and 70–96 (APAT…AAPQ). Positions 110–133 (TNQYSQQRHPGQQNRPQASSQPSR) are enriched in polar residues. Over residues 151–185 (MDARRRALAEAQVREVEDAKRRAEEEVRRQAEEVE) the composition is skewed to basic and acidic residues. Residues 211–251 (APEPVAEPVAPVAETPRAADPAPRAPSPAGAKPAAGAPAPS) are compositionally biased toward low complexity. Residues 424–591 (SRPPVVTIMG…AVLLQAEILD (168 aa)) enclose the tr-type G domain. A G1 region spans residues 433–440 (GHVDHGKT). Residue 433–440 (GHVDHGKT) participates in GTP binding. The G2 stretch occupies residues 458–462 (GITQH). The interval 479–482 (DTPG) is G3. GTP-binding positions include 479–483 (DTPGH) and 533–536 (NKID). Positions 533 to 536 (NKID) are G4. The G5 stretch occupies residues 569-571 (SAK).

This sequence belongs to the TRAFAC class translation factor GTPase superfamily. Classic translation factor GTPase family. IF-2 subfamily.

Its subcellular location is the cytoplasm. Its function is as follows. One of the essential components for the initiation of protein synthesis. Protects formylmethionyl-tRNA from spontaneous hydrolysis and promotes its binding to the 30S ribosomal subunits. Also involved in the hydrolysis of GTP during the formation of the 70S ribosomal complex. This chain is Translation initiation factor IF-2, found in Allorhizobium ampelinum (strain ATCC BAA-846 / DSM 112012 / S4) (Agrobacterium vitis (strain S4)).